The primary structure comprises 548 residues: Nonribosomal peptide synthetase 8 (548 aa).

The Carrier domain maps to 1 to 77 (MNSLDQWRDT…QLRGENRSGP (77 aa)). Ser-35 carries the post-translational modification O-(pantetheine 4'-phosphoryl)serine. The segment at 122–537 (MAPISSIQEF…FKSLIAELAA (416 aa)) is condensation.

It belongs to the NRP synthetase family.

Its pathway is mycotoxin biosynthesis. Its function is as follows. Nonribosomal peptide synthetase; part of the gene cluster that mediates the biosynthesis of fumonisins B1 (FB1), B2 (FB2), B3 (FB3), and B4 (FB4), which are carcinogenic mycotoxins. Within the pathway FUM14 catalyzes esterification of CoA-activated tricarballylic acid to the C-14 and C-15 hydroxyls of the fumonisin backbone. The biosynthesis starts with the FUM1-catalyzed carbon chain assembly from one molecule of acetyl-CoA, eight molecules of malonyl-CoA, and two molecules of methionine (in S-adenosyl form). The C18 polyketide chain is released from the enzyme by a nucleophilic attack of a carbanion, which is derived from R-carbon of alanine by decarboxylation, on the carbonyl carbon of polyketide acyl chain. This step is catalyzed by the pyridoxal 5'-phosphate-dependent aminoacyl transferase FUM8. The resultant 3-keto intermediate is then stereospecifically reduced to a 3-hydroxyl product by reductase FUM13. Subsequent oxidations at C-10 by the cytochrome P450 monooxygenase FUM2, C-14 and C-15 by FUM6, FUM12 or FUM15, tricarballylic esterification of the hydroxyl groups on C-14 and C-15 by acyltransferase FUM14, and C-5 hydroxylation by 2-keto-glutarate-dependent dioxygenase FUM3 furnish the biosynthesis of fumonisins. The tricarballylic moieties are most likely derived from the citric acid cycle, and their addition to the carbon backbone may involve FUM7, FUM10, FUM11 and FUM14. This Gibberella moniliformis (strain M3125 / FGSC 7600) (Maize ear and stalk rot fungus) protein is Nonribosomal peptide synthetase 8.